Here is a 234-residue protein sequence, read N- to C-terminus: MAKHGKKYRAARATIDPAKRYTFQEALELATGSIFCKFDETLDIAVRLGVDPRHADQMVRGTVVLPNGLGKPVRVLVFAKGEKVKEALDAGADHAGGDELVDRIKEGWLEFDKTVATPDMMGAVGKIGKVLGPRGLMPNAKLGTVTFDLQKVVKEIKAGKVDFRVEKTGIVHAPMGKVSFGQEKLIQNISAFIDTLIRLKPTAAKGTYVRGIAISTTMGPGIQIDPLAVKTIVA.

Belongs to the universal ribosomal protein uL1 family. In terms of assembly, part of the 50S ribosomal subunit.

Binds directly to 23S rRNA. The L1 stalk is quite mobile in the ribosome, and is involved in E site tRNA release. Functionally, protein L1 is also a translational repressor protein, it controls the translation of the L11 operon by binding to its mRNA. In Syntrophobacter fumaroxidans (strain DSM 10017 / MPOB), this protein is Large ribosomal subunit protein uL1.